We begin with the raw amino-acid sequence, 92 residues long: DNA-directed RNA polymerase subunit omega (92 aa).

This sequence belongs to the RNA polymerase subunit omega family. The RNAP catalytic core consists of 2 alpha, 1 beta, 1 beta' and 1 omega subunit. When a sigma factor is associated with the core the holoenzyme is formed, which can initiate transcription.

The enzyme catalyses RNA(n) + a ribonucleoside 5'-triphosphate = RNA(n+1) + diphosphate. In terms of biological role, promotes RNA polymerase assembly. Latches the N- and C-terminal regions of the beta' subunit thereby facilitating its interaction with the beta and alpha subunits. The protein is DNA-directed RNA polymerase subunit omega of Acinetobacter baumannii (strain AB307-0294).